A 209-amino-acid chain; its full sequence is Ribonuclease HII (209 aa).

Positions 6–209 constitute an RNase H type-2 domain; that stretch reads SLEAGIDEAG…IKRMTNSRLF (204 aa). Asp12, Glu13, and Asp108 together coordinate a divalent metal cation.

Belongs to the RNase HII family. Requires Mn(2+) as cofactor. Mg(2+) serves as cofactor.

The protein localises to the cytoplasm. It catalyses the reaction Endonucleolytic cleavage to 5'-phosphomonoester.. Its function is as follows. Endonuclease that specifically degrades the RNA of RNA-DNA hybrids. The chain is Ribonuclease HII from Caldivirga maquilingensis (strain ATCC 700844 / DSM 13496 / JCM 10307 / IC-167).